Reading from the N-terminus, the 381-residue chain is G-protein coupled receptor homolog Q2/3L (381 aa).

Residues 1–91 (MNYTLSTVSS…HCDDGVDTTS (91 aa)) are Extracellular-facing. N-linked (GlcNAc...) asparagine; by host glycans are attached at residues Asn-2, Asn-15, Asn-19, Asn-41, Asn-50, Asn-56, and Asn-62. The helical transmembrane segment at 92–112 (FGLITLYSTIFFLGLFGNIIV) threads the bilayer. The Cytoplasmic segment spans residues 113-126 (LTVLRKYKIKTIQD). The chain crosses the membrane as a helical span at residues 127 to 147 (MFLLNLTLSDLIFVLVFPFNL). The Extracellular segment spans residues 148-165 (YDSIAKQWSLGDCLCKFK). Residues 166 to 186 (AMFYFVGFYNSMSFITLMSID) traverse the membrane as a helical segment. The Cytoplasmic portion of the chain corresponds to 187 to 206 (RYLAVVHPVKSMPIRTKRYG). The chain crosses the membrane as a helical span at residues 207–227 (IVLSMVVWIVSTIESFPIMLF). Over 228–251 (YETKKVYGITYCHVFYNDNAKIWK) the chain is Extracellular. Residues 252-272 (LFINFEINIFGMIIPLTILLY) traverse the membrane as a helical segment. The Cytoplasmic segment spans residues 273–294 (CYYKILNTLKTSQTKNKKAIKM). The chain crosses the membrane as a helical span at residues 295 to 315 (VFLIVICSVLFLLPFSVTVFV). At 316 to 336 (SSLYLLNVFSGCMALRFVNLA) the chain is on the extracellular side. A helical membrane pass occupies residues 337–357 (VHVAEIVSLCHCFINPLIYAF). The Cytoplasmic segment spans residues 358-381 (CSREFTKKLLRLRTTSSAGSISIG).

Belongs to the G-protein coupled receptor 1 family.

The protein resides in the host cell membrane. Putative chemokine receptor. This Ovis aries (Sheep) protein is G-protein coupled receptor homolog Q2/3L.